The chain runs to 125 residues: Large ribosomal subunit protein bL12 (125 aa).

Belongs to the bacterial ribosomal protein bL12 family. In terms of assembly, homodimer. Part of the ribosomal stalk of the 50S ribosomal subunit. Forms a multimeric L10(L12)X complex, where L10 forms an elongated spine to which 2 to 4 L12 dimers bind in a sequential fashion. Binds GTP-bound translation factors.

Forms part of the ribosomal stalk which helps the ribosome interact with GTP-bound translation factors. Is thus essential for accurate translation. In Chelativorans sp. (strain BNC1), this protein is Large ribosomal subunit protein bL12.